The following is a 299-amino-acid chain: MRIAILSQGPELYSTKRLVEAATLRGHEVKVINPLECYMNINMRQSSIHIGGEELPPFDAVIPRIGASITFYGSAVLRQFEMMGVYALNDSVGISRSRDKLRSMQLMSRRGIGLPITGFANKPSDIPDLIDMVGGAPLVIKLLEGTQGIGVVLAETRKAAESVIEAFMGLKANIMVQEYIKEANGADIRCFVLGDKVIAAMKRQAMPGEFRSNLHRGGTASLVKLTPEERSVAIRAAKTMGLNVAGVDLLRSNHGPVVMEVNSSPGLEGIEGATAKDVAGAIIEFVEKNALKAKKPTQA.

Residues 104–287 (MQLMSRRGIG…VAGAIIEFVE (184 aa)) form the ATP-grasp domain. ATP-binding positions include lysine 141, 178-179 (EY), aspartate 187, and 211-213 (RSN). Residues aspartate 248, glutamate 260, and asparagine 262 each contribute to the Mg(2+) site. Mn(2+) contacts are provided by aspartate 248, glutamate 260, and asparagine 262.

This sequence belongs to the RimK family. Requires Mg(2+) as cofactor. It depends on Mn(2+) as a cofactor.

The chain is Probable alpha-L-glutamate ligase 2 from Shewanella sp. (strain MR-4).